Consider the following 2098-residue polypeptide: Unconventional myosin heavy chain 6 (2098 aa).

In terms of domain architecture, Myosin motor spans 62 to 732; it reads QGVEDMCQLG…HDLVLEQEYY (671 aa). 155–162 is a binding site for ATP; sequence GESGAGKT. Actin-binding regions lie at residues 609-631 and 711-725; these read LEQL…KPNE and QLGK…KHDL. IQ domains lie at 735–757, 758–787, and 804–833; these read LKDK…DFEK, QRQA…GFSR, and LRKT…RGEK. A disordered region spans residues 860–898; sequence FLPSDGKDSGNENDSADSSRRGSYSRLHTSPVMPPANIP. One can recognise a MyTH4 1 domain in the interval 929 to 1168; sequence HVKKPLKTAL…PSYVELQANK (240 aa). A Ras-associating domain is found at 1171-1211; sequence KPVVLAVTFMDGSVKTLCADSATTAAELCKQLAEKVGLTNS. Residues 1173–1481 form the FERM 1 domain; sequence VVLAVTFMDG…MFLEGLKKRS (309 aa). An SH3 domain is found at 1479 to 1547; sequence KRSRYLVAIK…RAENVYVLPT (69 aa). In terms of domain architecture, MyTH4 2 spans 1624 to 1772; it reads FSREHIDQPL…PHLVEVEAIQ (149 aa). One can recognise an FERM 2 domain in the interval 1778 to 2086; the sequence is IFHKVFFPDN…SYISLLISNQ (309 aa).

Belongs to the TRAFAC class myosin-kinesin ATPase superfamily. Myosin family. As to quaternary structure, interacts with unc-98.

It is found in the cytoplasm. Its function is as follows. Myosins are actin-based motor molecules with ATPase activity. Unconventional myosins serve in intracellular movements. Their highly divergent tails are presumed to bind to membranous compartments, which would be moved relative to actin filaments. This Caenorhabditis elegans protein is Unconventional myosin heavy chain 6.